Consider the following 415-residue polypeptide: Levansucrase (415 aa).

Residues tryptophan 45, aspartate 46, alanine 132, arginine 202, and aspartate 203 each coordinate sucrose. Aspartate 46 serves as the catalytic Nucleophile. Glutamate 287 serves as the catalytic Proton donor/acceptor.

The protein belongs to the glycosyl hydrolase 68 family.

It catalyses the reaction [6)-beta-D-fructofuranosyl-(2-&gt;](n) alpha-D-glucopyranoside + sucrose = [6)-beta-D-fructofuranosyl-(2-&gt;](n+1) alpha-D-glucopyranoside + D-glucose. Catalyzes the synthesis of levan, a fructose polymer, by transferring the fructosyl moiety from sucrose to a growing acceptor molecule. This chain is Levansucrase, found in Rahnella aquatilis (strain ATCC 33071 / DSM 4594 / JCM 1683 / NBRC 105701 / NCIMB 13365 / CIP 78.65).